Reading from the N-terminus, the 238-residue chain is Oil body-associated protein 1A (238 aa).

Belongs to the OBAP family. Expressed in seeds, but not in leaves or roots. Highest expression in scutellum. Detected in embryo axis and endosperm.

Its subcellular location is the lipid droplet. The protein is Oil body-associated protein 1A of Zea mays (Maize).